We begin with the raw amino-acid sequence, 506 residues long: 2-isopropylmalate synthase (506 aa).

The Pyruvate carboxyltransferase domain maps to 4–266 (ILFMDTTLRD…EPSMTLKEIK (263 aa)). The Mn(2+) site is built by Asp13, His201, His203, and Asn237. Residues 390-506 (NITQLQVHFV…KLKSFIQLVK (117 aa)) form a regulatory domain region.

This sequence belongs to the alpha-IPM synthase/homocitrate synthase family. LeuA type 1 subfamily. Homodimer. Requires Mn(2+) as cofactor.

The protein localises to the cytoplasm. It carries out the reaction 3-methyl-2-oxobutanoate + acetyl-CoA + H2O = (2S)-2-isopropylmalate + CoA + H(+). It participates in amino-acid biosynthesis; L-leucine biosynthesis; L-leucine from 3-methyl-2-oxobutanoate: step 1/4. Its function is as follows. Catalyzes the condensation of the acetyl group of acetyl-CoA with 3-methyl-2-oxobutanoate (2-ketoisovalerate) to form 3-carboxy-3-hydroxy-4-methylpentanoate (2-isopropylmalate). This Bacillus cereus (strain 03BB102) protein is 2-isopropylmalate synthase.